Consider the following 295-residue polypeptide: Glycine N-methyltransferase (295 aa).

Val2 bears the N-acetylvaline mark. (6S)-5-methyl-5,6,7,8-tetrahydrofolate contacts are provided by Ser4 and Tyr6. Position 10 is a phosphoserine (Ser10). Tyr22, Trp31, Tyr34, and Arg41 together coordinate S-adenosyl-L-methionine. Position 34 is a phosphotyrosine (Tyr34). Lys46 is modified (N6-succinyllysine). S-adenosyl-L-methionine is bound by residues Ala65, 86–88, 117–118, 139–142, and Arg178; these read DAS, NW, and LGNS. Lys193, Lys198, and Lys203 each carry N6-succinyllysine. (6S)-5-methyl-5,6,7,8-tetrahydrofolate is bound at residue His217. Residue Tyr223 coordinates S-adenosyl-L-methionine. Arg242 provides a ligand contact to (6S)-5-methyl-5,6,7,8-tetrahydrofolate.

Belongs to the class I-like SAM-binding methyltransferase superfamily. Glycine N-methyltransferase family. In terms of assembly, homotetramer. Expressed only in liver, pancreas, and prostate.

Its subcellular location is the cytoplasm. It carries out the reaction glycine + S-adenosyl-L-methionine = sarcosine + S-adenosyl-L-homocysteine + H(+). Its activity is regulated as follows. Inhibited by 5-methyltetrahydrofolate monoglutamate and by 5-methyltetrahydrofolate pentaglutamate, inhibition is much more effective by the pentaglutamate form than by the monoglutamate form. Two molecules of 5-methyltetrahydrofolate are bound per tetramer. The binding sites are localized between subunits. Inhibitor binding may preclude movements of the polypeptide chain that are necessary for enzyme activity. Functionally, catalyzes the methylation of glycine by using S-adenosylmethionine (AdoMet) to form N-methylglycine (sarcosine) with the concomitant production of S-adenosylhomocysteine (AdoHcy), a reaction regulated by the binding of 5-methyltetrahydrofolate. Plays an important role in the regulation of methyl group metabolism by regulating the ratio between S-adenosyl-L-methionine and S-adenosyl-L-homocysteine. This is Glycine N-methyltransferase from Homo sapiens (Human).